The following is a 114-amino-acid chain: Large ribosomal subunit protein uL22 (114 aa).

Belongs to the universal ribosomal protein uL22 family. In terms of assembly, part of the 50S ribosomal subunit.

Its function is as follows. This protein binds specifically to 23S rRNA; its binding is stimulated by other ribosomal proteins, e.g. L4, L17, and L20. It is important during the early stages of 50S assembly. It makes multiple contacts with different domains of the 23S rRNA in the assembled 50S subunit and ribosome. Functionally, the globular domain of the protein is located near the polypeptide exit tunnel on the outside of the subunit, while an extended beta-hairpin is found that lines the wall of the exit tunnel in the center of the 70S ribosome. This Streptococcus uberis (strain ATCC BAA-854 / 0140J) protein is Large ribosomal subunit protein uL22.